The following is a 481-amino-acid chain: Proline--tRNA ligase (481 aa).

Belongs to the class-II aminoacyl-tRNA synthetase family. ProS type 3 subfamily. In terms of assembly, homodimer.

The protein resides in the cytoplasm. The enzyme catalyses tRNA(Pro) + L-proline + ATP = L-prolyl-tRNA(Pro) + AMP + diphosphate. Its function is as follows. Catalyzes the attachment of proline to tRNA(Pro) in a two-step reaction: proline is first activated by ATP to form Pro-AMP and then transferred to the acceptor end of tRNA(Pro). The chain is Proline--tRNA ligase from Chlorobaculum tepidum (strain ATCC 49652 / DSM 12025 / NBRC 103806 / TLS) (Chlorobium tepidum).